Consider the following 361-residue polypeptide: Histidine biosynthesis bifunctional protein HisB (361 aa).

The segment at 1–172 (MSQPTLFIDR…PKTTACERPP (172 aa)) is histidinol-phosphatase. The Nucleophile role is filled by D9. The Mg(2+) site is built by D9 and D11. D11 (proton donor) is an active-site residue. The Zn(2+) site is built by C92, H94, C100, and C102. Mg(2+) is bound at residue D129. Residues 173-361 (RYAEVVRTTK…NELPSSKGVL (189 aa)) form an imidazoleglycerol-phosphate dehydratase region.

It in the N-terminal section; belongs to the histidinol-phosphatase family. The protein in the C-terminal section; belongs to the imidazoleglycerol-phosphate dehydratase family. Requires Mg(2+) as cofactor. Zn(2+) serves as cofactor.

It localises to the cytoplasm. The enzyme catalyses D-erythro-1-(imidazol-4-yl)glycerol 3-phosphate = 3-(imidazol-4-yl)-2-oxopropyl phosphate + H2O. The catalysed reaction is L-histidinol phosphate + H2O = L-histidinol + phosphate. It functions in the pathway amino-acid biosynthesis; L-histidine biosynthesis; L-histidine from 5-phospho-alpha-D-ribose 1-diphosphate: step 6/9. Its pathway is amino-acid biosynthesis; L-histidine biosynthesis; L-histidine from 5-phospho-alpha-D-ribose 1-diphosphate: step 8/9. The protein is Histidine biosynthesis bifunctional protein HisB of Actinobacillus pleuropneumoniae serotype 7 (strain AP76).